The primary structure comprises 103 residues: Iron-sulfur cluster assembly protein CyaY (103 aa).

The protein belongs to the frataxin family.

In terms of biological role, involved in iron-sulfur (Fe-S) cluster assembly. May act as a regulator of Fe-S biogenesis. In Rickettsia africae (strain ESF-5), this protein is Iron-sulfur cluster assembly protein CyaY.